A 325-amino-acid polypeptide reads, in one-letter code: Methionyl-tRNA formyltransferase (325 aa).

(6S)-5,6,7,8-tetrahydrofolate is bound at residue 113-116 (SLLP).

It belongs to the Fmt family.

The catalysed reaction is L-methionyl-tRNA(fMet) + (6R)-10-formyltetrahydrofolate = N-formyl-L-methionyl-tRNA(fMet) + (6S)-5,6,7,8-tetrahydrofolate + H(+). Functionally, attaches a formyl group to the free amino group of methionyl-tRNA(fMet). The formyl group appears to play a dual role in the initiator identity of N-formylmethionyl-tRNA by promoting its recognition by IF2 and preventing the misappropriation of this tRNA by the elongation apparatus. In Chromohalobacter salexigens (strain ATCC BAA-138 / DSM 3043 / CIP 106854 / NCIMB 13768 / 1H11), this protein is Methionyl-tRNA formyltransferase.